We begin with the raw amino-acid sequence, 361 residues long: G2/mitotic-specific cyclin-B1 (361 aa).

Positions 1–13 (MLRATNNRRTSNN) are enriched in polar residues. The disordered stretch occupies residues 1-33 (MLRATNNRRTSNNVEKDSLQMAKHGNGPLKPVN).

This sequence belongs to the cyclin family. Cyclin AB subfamily. Interacts with the CDK1 protein kinase to form a serine/threonine kinase holoenzyme complex also known as maturation promoting factor (MPF). The cyclin subunit imparts substrate specificity to the complex. Interacts with E3 ubiquitin-protein ligase etc-1. Post-translationally, ubiquitinated by etc-1 likely during meiosis, resulting in its degradation.

The protein resides in the cytoplasm. Its function is as follows. Essential for the control of the cell cycle at the G2/M (mitosis) transition. This Caenorhabditis elegans protein is G2/mitotic-specific cyclin-B1 (cyb-1).